Reading from the N-terminus, the 353-residue chain is Ferredoxin--NADP reductase (353 aa).

7 residues coordinate FAD: aspartate 33, glutamine 41, tyrosine 46, valine 86, phenylalanine 121, aspartate 293, and threonine 333.

It belongs to the ferredoxin--NADP reductase type 2 family. Homodimer. FAD is required as a cofactor.

The enzyme catalyses 2 reduced [2Fe-2S]-[ferredoxin] + NADP(+) + H(+) = 2 oxidized [2Fe-2S]-[ferredoxin] + NADPH. This Verminephrobacter eiseniae (strain EF01-2) protein is Ferredoxin--NADP reductase.